Here is a 240-residue protein sequence, read N- to C-terminus: EF-hand domain-containing protein D1 (240 aa).

Residues 17–54 (EVRAETDQGDPQPAPCDAPAGHPEPEPPARAPTASADS) are disordered. EF-hand domains lie at 91–126 (RLLK…LGAP) and 127–162 (QTHL…AAAG). Asp104, Asp108, Glu115, Asp140, Asp142, Asp144, Lys146, and Glu151 together coordinate Ca(2+).

In terms of tissue distribution, widely expressed. Highest expression in testis, followed by ovary, kidney, cerebrum, cerebellum, heart, liver, and spleen. In the cerebrum and cerebellum, undetectable at embryonic stages, expression increases after birth up to adult stage. In adult CNS, detected in neurons of the cerebellum, cerebrum and hippocampus formation, including dentate gyrus and Cornu Ammonis, but not in the white matter. In the testis, expressed in spermatocytes, but not in spermatogonia nor in interstitial cells. In ovary, found predominantly in mural granulosa cells and those of the cumulus oophorus. In kidney, expressed in collecting ducts, but not in glomeruli. Not detected in skeletal muscle.

The protein localises to the mitochondrion inner membrane. Acts as a calcium sensor for mitochondrial flash (mitoflash) activation, an event characterized by stochastic bursts of superoxide production. May play a role in neuronal differentiation. This chain is EF-hand domain-containing protein D1 (Efhd1), found in Mus musculus (Mouse).